Reading from the N-terminus, the 88-residue chain is Protein LE25 (88 aa).

Positions 1–88 (MQTGKDAASA…YGATGNHTTF (88 aa)) are disordered. Residues 14–65 (GMEKTKANVQEKAERMTTRDPLKKEMATEKKEDRVAAAEMGKRDAKAQHAAE) are compositionally biased toward basic and acidic residues.

This sequence belongs to the LEA type 1 family. As to expression, accumulates in developing seeds and drought-stressed leaves.

The protein is Protein LE25 (LE25) of Solanum lycopersicum (Tomato).